A 460-amino-acid polypeptide reads, in one-letter code: Muscarinic acetylcholine receptor M1 (460 aa).

The Extracellular segment spans residues 1 to 22; sequence MNTSVPPAVSPNITVLAPGKGP. N-linked (GlcNAc...) asparagine glycans are attached at residues Asn2 and Asn12. The chain crosses the membrane as a helical span at residues 23–48; that stretch reads WQVAFIGITTGLLSLATVTGNLLVLI. Residues 49–62 are Cytoplasmic-facing; that stretch reads SFKVNTELKTVNNY. The chain crosses the membrane as a helical span at residues 63–84; it reads FLLSLACADLIIGTFSMNLYTT. Residues 85–95 are Extracellular-facing; that stretch reads YLLMGHWALGT. The chain crosses the membrane as a helical span at residues 96-121; it reads LACDLWLALDYVASNASVMNLLLISF. A disulfide bridge connects residues Cys98 and Cys178. At 122–142 the chain is on the cytoplasmic side; the sequence is DRYFSVTRPLSYRAKRTPRRA. A helical transmembrane segment spans residues 143–164; that stretch reads ALMIGLAWLVSFVLWAPAILFW. Topologically, residues 165–185 are extracellular; the sequence is QYLVGERTVLAGQCYIQFLSQ. The chain crosses the membrane as a helical span at residues 186 to 209; that stretch reads PIITFGTAMAAFYLPVTVMCTLYW. The Cytoplasmic segment spans residues 210-366; it reads RIYRETENRA…LVKEKKAART (157 aa). 3 disordered regions span residues 225 to 257, 274 to 297, and 310 to 351; these read LQGS…SPPG, WKEE…EEPG, and EAQA…QLAK. Position 230 is a phosphothreonine (Thr230). Positions 238 to 257 are enriched in low complexity; it reads SSSSERSQPGAEGSPESPPG. Ser254 is subject to Phosphoserine. Residues 328–343 show a composition bias toward basic residues; sequence RPTKKGRDRGGKGQKP. A helical transmembrane segment spans residues 367-390; the sequence is LSAILLAFILTWTPYNIMVLVSTF. At 391-397 the chain is on the extracellular side; that stretch reads CKDCVPE. Residues 398 to 420 traverse the membrane as a helical segment; the sequence is TLWELGYWLCYVNSTVNPMCYAL. The Cytoplasmic portion of the chain corresponds to 421 to 460; it reads CNKAFRDTFRLLLLCRWDKRRWRKIPKRPGSVHRTPSRQC. Ser451 is subject to Phosphoserine. Residue Thr455 is modified to Phosphothreonine. Ser457 is subject to Phosphoserine.

Belongs to the G-protein coupled receptor 1 family. Muscarinic acetylcholine receptor subfamily. CHRM1 sub-subfamily. Interacts with GPRASP2. Interacts with TMEM147.

Its subcellular location is the cell membrane. It localises to the postsynaptic cell membrane. In terms of biological role, the muscarinic acetylcholine receptor mediates various cellular responses, including inhibition of adenylate cyclase, breakdown of phosphoinositides and modulation of potassium channels through the action of G proteins. Primary transducing effect is Pi turnover. This is Muscarinic acetylcholine receptor M1 (Chrm1) from Mus musculus (Mouse).